We begin with the raw amino-acid sequence, 212 residues long: MKTRIDLTVEPRETGKHNSRGLRTSRNVPAVIYGAVTPTNVSVGEKEIVKYNTRAYENALFNLKSSDKTANGIVVLIKSVDVHPLTRRPQHVDFFALDLKKAVRVNVEVRLEGKAIGLSEGGLLNVVLRSVEVECLPTEIPEFFTADISNLAVGDALHVSDIKVSGSVKMITGAEQTIAVVNAQEEEVAAAPAAAAAPAAAAPAAKAPAAKK.

A compositionally biased stretch (basic and acidic residues) spans 1–16 (MKTRIDLTVEPRETGK). Residues 1–22 (MKTRIDLTVEPRETGKHNSRGL) are disordered.

The protein belongs to the bacterial ribosomal protein bL25 family. CTC subfamily. Part of the 50S ribosomal subunit; part of the 5S rRNA/L5/L18/L25 subcomplex. Contacts the 5S rRNA. Binds to the 5S rRNA independently of L5 and L18.

Functionally, this is one of the proteins that binds to the 5S RNA in the ribosome where it forms part of the central protuberance. The chain is Large ribosomal subunit protein bL25 from Bdellovibrio bacteriovorus (strain ATCC 15356 / DSM 50701 / NCIMB 9529 / HD100).